A 155-amino-acid chain; its full sequence is 6,7-dimethyl-8-ribityllumazine synthase (155 aa).

5-amino-6-(D-ribitylamino)uracil is bound by residues Phe24, 58 to 60 (AFE), and 82 to 84 (VII). 87-88 (ST) is a binding site for (2S)-2-hydroxy-3-oxobutyl phosphate. His90 (proton donor) is an active-site residue. Residue Phe115 coordinates 5-amino-6-(D-ribitylamino)uracil. Arg129 contributes to the (2S)-2-hydroxy-3-oxobutyl phosphate binding site.

It belongs to the DMRL synthase family.

It carries out the reaction (2S)-2-hydroxy-3-oxobutyl phosphate + 5-amino-6-(D-ribitylamino)uracil = 6,7-dimethyl-8-(1-D-ribityl)lumazine + phosphate + 2 H2O + H(+). Its pathway is cofactor biosynthesis; riboflavin biosynthesis; riboflavin from 2-hydroxy-3-oxobutyl phosphate and 5-amino-6-(D-ribitylamino)uracil: step 1/2. Its function is as follows. Catalyzes the formation of 6,7-dimethyl-8-ribityllumazine by condensation of 5-amino-6-(D-ribitylamino)uracil with 3,4-dihydroxy-2-butanone 4-phosphate. This is the penultimate step in the biosynthesis of riboflavin. This Chlorobium phaeobacteroides (strain DSM 266 / SMG 266 / 2430) protein is 6,7-dimethyl-8-ribityllumazine synthase.